Consider the following 486-residue polypeptide: ATP synthase subunit beta (486 aa).

167–174 (GGAGVGKT) serves as a coordination point for ATP.

It belongs to the ATPase alpha/beta chains family. F-type ATPases have 2 components, CF(1) - the catalytic core - and CF(0) - the membrane proton channel. CF(1) has five subunits: alpha(3), beta(3), gamma(1), delta(1), epsilon(1). CF(0) has three main subunits: a(1), b(2) and c(9-12). The alpha and beta chains form an alternating ring which encloses part of the gamma chain. CF(1) is attached to CF(0) by a central stalk formed by the gamma and epsilon chains, while a peripheral stalk is formed by the delta and b chains.

Its subcellular location is the cell inner membrane. The enzyme catalyses ATP + H2O + 4 H(+)(in) = ADP + phosphate + 5 H(+)(out). Functionally, produces ATP from ADP in the presence of a proton gradient across the membrane. The catalytic sites are hosted primarily by the beta subunits. The polypeptide is ATP synthase subunit beta (Anaplasma marginale (strain St. Maries)).